A 261-amino-acid polypeptide reads, in one-letter code: Proline-rich protein HaeIII subfamily 1 (261 aa).

An N-terminal signal peptide occupies residues 1–15 (MLVVLFTVALLALSS). The segment at 15-261 (SAQGPREENQ…PPQGRPQGPR (247 aa)) is disordered. 2 stretches are compositionally biased toward pro residues: residues 32-44 (QRPP…PRPP) and 51-237 (GPPP…PPTG). A compositionally biased stretch (low complexity) spans 238–261 (GPQQTPPLAGNTQGPPQGRPQGPR).

The protein resides in the secreted. This is Proline-rich protein HaeIII subfamily 1 (Prh1) from Mus musculus (Mouse).